Consider the following 320-residue polypeptide: Beta-ketoacyl-[acyl-carrier-protein] synthase III (320 aa).

Catalysis depends on residues Cys-112 and His-245. Residues 246–250 (QANIR) are ACP-binding. Asn-275 is a catalytic residue.

This sequence belongs to the thiolase-like superfamily. FabH family. Homodimer.

It is found in the cytoplasm. The enzyme catalyses malonyl-[ACP] + acetyl-CoA + H(+) = 3-oxobutanoyl-[ACP] + CO2 + CoA. It participates in lipid metabolism; fatty acid biosynthesis. Functionally, catalyzes the condensation reaction of fatty acid synthesis by the addition to an acyl acceptor of two carbons from malonyl-ACP. Catalyzes the first condensation reaction which initiates fatty acid synthesis and may therefore play a role in governing the total rate of fatty acid production. Possesses both acetoacetyl-ACP synthase and acetyl transacylase activities. Its substrate specificity determines the biosynthesis of branched-chain and/or straight-chain of fatty acids. The polypeptide is Beta-ketoacyl-[acyl-carrier-protein] synthase III (Streptococcus thermophilus (strain CNRZ 1066)).